A 766-amino-acid polypeptide reads, in one-letter code: Serine/threonine-protein kinase tousled-like 1 (766 aa).

Residues methionine 1–aspartate 198 form a disordered region. Low complexity predominate over residues serine 20–serine 33. Threonine 38 is subject to Phosphothreonine. The span at arginine 43–glutamate 64 shows a compositional bias: basic and acidic residues. Phosphoserine occurs at positions 54, 77, and 80. The span at threonine 68–alanine 85 shows a compositional bias: low complexity. Over residues alanine 87–serine 103 the composition is skewed to polar residues. Over residues serine 105–arginine 121 the composition is skewed to basic and acidic residues. 4 positions are modified to phosphoserine: serine 134, serine 159, serine 174, and serine 176. Residues serine 170–threonine 192 are compositionally biased toward low complexity. A coiled-coil region spans residues asparagine 229–glutamate 280. Residues lysine 344 to proline 381 form a disordered region. The segment covering threonine 353–glutamate 365 has biased composition (polar residues). Residues histidine 397–glutamine 445 are a coiled coil. In terms of domain architecture, Protein kinase spans tyrosine 456–leucine 734. ATP contacts are provided by residues leucine 462–valine 470 and lysine 485. Aspartate 586 (proton acceptor) is an active-site residue. Serine 743 bears the Phosphoserine mark. The segment at glycine 745–tyrosine 766 is disordered.

This sequence belongs to the protein kinase superfamily. Ser/Thr protein kinase family. In terms of assembly, heterodimer with TLK2. Mg(2+) is required as a cofactor. As to expression, ubiquitously expressed in all tissues examined.

The protein resides in the nucleus. It catalyses the reaction L-seryl-[protein] + ATP = O-phospho-L-seryl-[protein] + ADP + H(+). The catalysed reaction is L-threonyl-[protein] + ATP = O-phospho-L-threonyl-[protein] + ADP + H(+). With respect to regulation, cell-cycle regulated, maximal activity in S-phase. Inactivated by phosphorylation at Ser-743, potentially by CHEK1. In terms of biological role, rapidly and transiently inhibited by phosphorylation following the generation of DNA double-stranded breaks during S-phase. This is cell cycle checkpoint and ATM-pathway dependent and appears to regulate processes involved in chromatin assembly. Isoform 3 protects the cells from the ionizing radiation by facilitating the repair of DSBs. In vitro, phosphorylates histone H3 at 'Ser-10'. The chain is Serine/threonine-protein kinase tousled-like 1 (Tlk1) from Mus musculus (Mouse).